The chain runs to 185 residues: Elongation factor P (185 aa).

The protein belongs to the elongation factor P family.

The protein resides in the cytoplasm. It functions in the pathway protein biosynthesis; polypeptide chain elongation. In terms of biological role, involved in peptide bond synthesis. Stimulates efficient translation and peptide-bond synthesis on native or reconstituted 70S ribosomes in vitro. Probably functions indirectly by altering the affinity of the ribosome for aminoacyl-tRNA, thus increasing their reactivity as acceptors for peptidyl transferase. This chain is Elongation factor P, found in Picosynechococcus sp. (strain ATCC 27264 / PCC 7002 / PR-6) (Agmenellum quadruplicatum).